A 128-amino-acid chain; its full sequence is Small ribosomal subunit protein uS9c (128 aa).

The protein belongs to the universal ribosomal protein uS9 family.

The protein resides in the plastid. In Euglena longa (Euglenophycean alga), this protein is Small ribosomal subunit protein uS9c (rps9).